A 427-amino-acid chain; its full sequence is Glutamate-1-semialdehyde 2,1-aminomutase (427 aa).

At Lys-265 the chain carries N6-(pyridoxal phosphate)lysine.

The protein belongs to the class-III pyridoxal-phosphate-dependent aminotransferase family. HemL subfamily. As to quaternary structure, homodimer. Requires pyridoxal 5'-phosphate as cofactor.

The protein localises to the cytoplasm. The catalysed reaction is (S)-4-amino-5-oxopentanoate = 5-aminolevulinate. The protein operates within porphyrin-containing compound metabolism; protoporphyrin-IX biosynthesis; 5-aminolevulinate from L-glutamyl-tRNA(Glu): step 2/2. This Neisseria meningitidis serogroup C / serotype 2a (strain ATCC 700532 / DSM 15464 / FAM18) protein is Glutamate-1-semialdehyde 2,1-aminomutase.